Consider the following 274-residue polypeptide: 26S proteasome regulatory subunit RPN12 (274 aa).

Residues 76-251 (DSFENYFNQL…KADYEDEMMH (176 aa)) enclose the PCI domain.

Belongs to the proteasome subunit S14 family.

Its function is as follows. Acts as a regulatory subunit of the 26S proteasome which is involved in the ATP-dependent degradation of ubiquitinated proteins. Necessary for activation of the CDC28 kinase. This is 26S proteasome regulatory subunit RPN12 (RPN12) from Saccharomyces cerevisiae (strain ATCC 204508 / S288c) (Baker's yeast).